Reading from the N-terminus, the 299-residue chain is Acetaldehyde dehydrogenase 6 (299 aa).

C125 acts as the Acyl-thioester intermediate in catalysis. NAD(+) contacts are provided by residues 156 to 164 (GAGPGTRAN) and N275.

Belongs to the acetaldehyde dehydrogenase family.

The catalysed reaction is acetaldehyde + NAD(+) + CoA = acetyl-CoA + NADH + H(+). This Rhodococcus jostii (strain RHA1) protein is Acetaldehyde dehydrogenase 6 (hpdG).